We begin with the raw amino-acid sequence, 461 residues long: ATP synthase subunit beta 2 (461 aa).

151–158 serves as a coordination point for ATP; that stretch reads GGAGVGKT.

The protein belongs to the ATPase alpha/beta chains family. As to quaternary structure, F-type ATPases have 2 components, CF(1) - the catalytic core - and CF(0) - the membrane proton channel. CF(1) has five subunits: alpha(3), beta(3), gamma(1), delta(1), epsilon(1). CF(0) has three main subunits: a(1), b(2) and c(9-12). The alpha and beta chains form an alternating ring which encloses part of the gamma chain. CF(1) is attached to CF(0) by a central stalk formed by the gamma and epsilon chains, while a peripheral stalk is formed by the delta and b chains.

It localises to the cell inner membrane. The enzyme catalyses ATP + H2O + 4 H(+)(in) = ADP + phosphate + 5 H(+)(out). Functionally, produces ATP from ADP in the presence of a proton gradient across the membrane. The catalytic sites are hosted primarily by the beta subunits. The polypeptide is ATP synthase subunit beta 2 (Photobacterium profundum (strain SS9)).